The chain runs to 1270 residues: Nuclear exosome regulator NRDE2 (1270 aa).

Disordered regions lie at residues 1–22 (MFRA…ENPD) and 119–209 (SVKS…HTLM). A compositionally biased stretch (polar residues) spans 119 to 135 (SVKSLNGCQDPPETSQQ). Basic residues predominate over residues 164 to 184 (QRSRSREKKRRKKERRRKRSS). Basic and acidic residues predominate over residues 192 to 204 (RSRDRSSRARDTS).

It belongs to the NRDE2 family. As to quaternary structure, interacts with nrde-3.

It localises to the nucleus. It is found in the nucleus speckle. The protein localises to the nucleolus. Its function is as follows. Protein of the nuclear speckles that regulates RNA exosomal degradation. Involved in short interfering RNAs-mediated silencing in nuclei. Functions with nrde-3 in the nuclear RNA-mediated gene silencing (RNAi) pathway to regulate gene expression via inhibition of RNA polymerases I and II during the elongation phase of transcription. Required for exogenous RNAi-induced H3K27 methylation. The polypeptide is Nuclear exosome regulator NRDE2 (nrde-2) (Caenorhabditis elegans).